A 130-amino-acid polypeptide reads, in one-letter code: Small ribosomal subunit protein uS9 (130 aa).

It belongs to the universal ribosomal protein uS9 family.

The chain is Small ribosomal subunit protein uS9 from Oceanobacillus iheyensis (strain DSM 14371 / CIP 107618 / JCM 11309 / KCTC 3954 / HTE831).